The chain runs to 553 residues: Methyl-coenzyme M reductase II subunit alpha (553 aa).

Gln150 provides a ligand contact to coenzyme F430. Coenzyme B is bound by residues Arg228, Lys259–His260, and Arg273. Residue His260 is modified to Pros-methylhistidine. The residue at position 274 (Arg274) is a 5-methylarginine. Tyr335 is a coenzyme M binding site. At Gln402 the chain carries 2-methylglutamine. A coenzyme M-binding site is contributed by Tyr446. Gly447 is subject to 1-thioglycine. Asp452 is modified ((Z)-2,3-didehydroaspartate). Residue Cys454 is modified to S-methylcysteine.

This sequence belongs to the methyl-coenzyme M reductase alpha subunit family. MCR is a hexamer of two alpha, two beta, and two gamma chains, forming a dimer of heterotrimers. The cofactor is coenzyme F430. The alpha subunit contains six modified amino acids near the active site region. Is methylated on His-260, Arg-274, Gln-402 and Cys-454, probably by the action of specific S-adenosylmethionine-dependent methyltransferases. Also contains a thioglycine at position 447, forming a thiopeptide bond. Contains a didehydroaspartate residue at position 452. The methylation on C5 of Arg-274 is a post-translational methylation not essential in vivo, but which plays a role for the stability and structural integrity of MCR.

It carries out the reaction coenzyme B + methyl-coenzyme M = methane + coenzyme M-coenzyme B heterodisulfide. The protein operates within one-carbon metabolism; methyl-coenzyme M reduction; methane from methyl-coenzyme M: step 1/1. Component of the methyl-coenzyme M reductase (MCR) I that catalyzes the reductive cleavage of methyl-coenzyme M (CoM-S-CH3 or 2-(methylthio)ethanesulfonate) using coenzyme B (CoB or 7-mercaptoheptanoylthreonine phosphate) as reductant which results in the production of methane and the mixed heterodisulfide of CoB and CoM (CoM-S-S-CoB). This is the final step in methanogenesis. In Methanothermobacter thermautotrophicus (strain ATCC 29096 / DSM 1053 / JCM 10044 / NBRC 100330 / Delta H) (Methanobacterium thermoautotrophicum), this protein is Methyl-coenzyme M reductase II subunit alpha (mrtA).